A 37-amino-acid polypeptide reads, in one-letter code: Large ribosomal subunit protein bL36 (37 aa).

Belongs to the bacterial ribosomal protein bL36 family.

The polypeptide is Large ribosomal subunit protein bL36 (Mycoplasma pneumoniae (strain ATCC 29342 / M129 / Subtype 1) (Mycoplasmoides pneumoniae)).